Consider the following 573-residue polypeptide: Probable zinc metallopeptidase EGY3, chloroplastic (573 aa).

A chloroplast-targeting transit peptide spans 1-50; sequence MASLFVSTPSSSLTLKSCHSLHLRRFDRAEFSNFGKASVNQTTRSRHSLR. The tract at residues 38–105 is disordered; it reads SVNQTTRSRH…EKKSKQQEMD (68 aa). Composition is skewed to basic and acidic residues over residues 52 to 62 and 96 to 105; these read SAEDDRVREPV and EKKSKQQEMD. Positions 122-185 form a coiled coil; that stretch reads EAAIKLEKTR…KALDLNKLKS (64 aa). Transmembrane regions (helical) follow at residues 274 to 294, 305 to 325, 376 to 396, 414 to 434, 441 to 461, 493 to 513, and 536 to 556; these read VSAIALCVTTFGTIALMSGFF, IANVVPLFGGFLSILGVSEIA, ASAYLTSLLLAAAAFISDGSF, PLLSFVQFVVGPYADDLGNVL, VGVPVDPLAFAGLLGMVVTSL, LLLGIGGLSGSVLCLAWGLFA, and FAWGIVLGLICFLTLFPNSGG.

The protein belongs to the peptidase M50B family.

The protein resides in the plastid. It is found in the chloroplast membrane. Functionally, probable membrane-associated metalloprotease that may be involved in chloroplast development. The protein is Probable zinc metallopeptidase EGY3, chloroplastic (EGY3) of Arabidopsis thaliana (Mouse-ear cress).